A 206-amino-acid polypeptide reads, in one-letter code: Protein GrpE (206 aa).

This sequence belongs to the GrpE family. In terms of assembly, homodimer.

The protein localises to the cytoplasm. Its function is as follows. Participates actively in the response to hyperosmotic and heat shock by preventing the aggregation of stress-denatured proteins, in association with DnaK and GrpE. It is the nucleotide exchange factor for DnaK and may function as a thermosensor. Unfolded proteins bind initially to DnaJ; upon interaction with the DnaJ-bound protein, DnaK hydrolyzes its bound ATP, resulting in the formation of a stable complex. GrpE releases ADP from DnaK; ATP binding to DnaK triggers the release of the substrate protein, thus completing the reaction cycle. Several rounds of ATP-dependent interactions between DnaJ, DnaK and GrpE are required for fully efficient folding. The protein is Protein GrpE of Shewanella sp. (strain W3-18-1).